The sequence spans 492 residues: Glutamyl-tRNA(Gln) amidotransferase subunit A (492 aa).

Active-site charge relay system residues include K78 and S158. S182 serves as the catalytic Acyl-ester intermediate.

The protein belongs to the amidase family. GatA subfamily. Heterotrimer of A, B and C subunits.

It carries out the reaction L-glutamyl-tRNA(Gln) + L-glutamine + ATP + H2O = L-glutaminyl-tRNA(Gln) + L-glutamate + ADP + phosphate + H(+). Allows the formation of correctly charged Gln-tRNA(Gln) through the transamidation of misacylated Glu-tRNA(Gln) in organisms which lack glutaminyl-tRNA synthetase. The reaction takes place in the presence of glutamine and ATP through an activated gamma-phospho-Glu-tRNA(Gln). The chain is Glutamyl-tRNA(Gln) amidotransferase subunit A from Parvibaculum lavamentivorans (strain DS-1 / DSM 13023 / NCIMB 13966).